The sequence spans 174 residues: Methylated protein MJ0556 (174 aa).

CBS domains are found at residues 28–87 and 91–156; these read MISG…YLNV and MLKN…IIKE.

Post-translationally, methylated at an undetermined residue between Ser-2 and Asp-26.

The sequence is that of Methylated protein MJ0556 from Methanocaldococcus jannaschii (strain ATCC 43067 / DSM 2661 / JAL-1 / JCM 10045 / NBRC 100440) (Methanococcus jannaschii).